The primary structure comprises 359 residues: 4-hydroxy-3-methylbut-2-en-1-yl diphosphate synthase (flavodoxin) (359 aa).

[4Fe-4S] cluster is bound by residues C264, C267, C299, and E306.

The protein belongs to the IspG family. The cofactor is [4Fe-4S] cluster.

It carries out the reaction (2E)-4-hydroxy-3-methylbut-2-enyl diphosphate + oxidized [flavodoxin] + H2O + 2 H(+) = 2-C-methyl-D-erythritol 2,4-cyclic diphosphate + reduced [flavodoxin]. It participates in isoprenoid biosynthesis; isopentenyl diphosphate biosynthesis via DXP pathway; isopentenyl diphosphate from 1-deoxy-D-xylulose 5-phosphate: step 5/6. Its function is as follows. Converts 2C-methyl-D-erythritol 2,4-cyclodiphosphate (ME-2,4cPP) into 1-hydroxy-2-methyl-2-(E)-butenyl 4-diphosphate. In Helicobacter pylori (strain ATCC 700392 / 26695) (Campylobacter pylori), this protein is 4-hydroxy-3-methylbut-2-en-1-yl diphosphate synthase (flavodoxin).